The sequence spans 146 residues: Phospholipase A2 OS2 (146 aa).

An N-terminal signal peptide occupies residues 1-27 (MHPAHLLVLLAVCVSLLGASDIPPLPL). 7 disulfides stabilise this stretch: C38-C99, C54-C145, C56-C72, C71-C126, C78-C119, C88-C112, and C106-C117. Ca(2+) contacts are provided by Y55, G57, and G59. The active site involves H75. Ca(2+) is bound at residue D76. The active site involves D120.

The protein belongs to the phospholipase A2 family. Group I subfamily. D49 sub-subfamily. As to quaternary structure, monomer. It depends on Ca(2+) as a cofactor. As to expression, expressed by the venom gland.

It is found in the secreted. The catalysed reaction is a 1,2-diacyl-sn-glycero-3-phosphocholine + H2O = a 1-acyl-sn-glycero-3-phosphocholine + a fatty acid + H(+). Snake venom phospholipase A2 (PLA2) that shows high presynaptic neurotoxicity in vertebrata that is independent of catalytic activity, as well as local myotoxicity when intramuscularly injected into mice. Blocks acetylcholine release in Aplysia neurons, and potentiates pro-inflammatory cellular signaling. Potentiates glutamate excitoxicity when coinjected into brain of rats. May act by binding in a calcium-dependent fashion and with high affinity to a neuronal-type (N-type) PLA2 receptor, and with very high affinity to a muscle-type (M-type) PLA2 receptor. In vitro, shows a high-specific activity on E.coli membranes and is more efficient on the anionic phospholipid POPG than on the anionic phospholipid POPS or the zwitterionic phospholipid POPC. Exerts catalytically-independent anti-HIV (IC(50) is 35 nM) activity and catalytically-dependent antimalarial activity (IC(50) is 3.1 nM when tested on P.falciparum grown in serum that contains lipoproteins). PLA2 catalyzes the calcium-dependent hydrolysis of the 2-acyl groups in 3-sn-phosphoglycerides. In Oxyuranus scutellatus scutellatus (Australian taipan), this protein is Phospholipase A2 OS2.